Consider the following 356-residue polypeptide: Nicotinate-nucleotide--dimethylbenzimidazole phosphoribosyltransferase (356 aa).

The active-site Proton acceptor is glutamate 317.

The protein belongs to the CobT family. As to quaternary structure, homodimer.

It catalyses the reaction 5,6-dimethylbenzimidazole + nicotinate beta-D-ribonucleotide = alpha-ribazole 5'-phosphate + nicotinate + H(+). The protein operates within nucleoside biosynthesis; alpha-ribazole biosynthesis; alpha-ribazole from 5,6-dimethylbenzimidazole: step 1/2. In terms of biological role, catalyzes the synthesis of alpha-ribazole-5'-phosphate from nicotinate mononucleotide (NAMN) and 5,6-dimethylbenzimidazole (DMB). In Salmonella paratyphi A (strain AKU_12601), this protein is Nicotinate-nucleotide--dimethylbenzimidazole phosphoribosyltransferase.